The chain runs to 448 residues: Trigger factor (448 aa).

Positions 172–257 constitute a PPIase FKBP-type domain; it reads GDRVTVDFVG…MKKIEWPHLP (86 aa).

It belongs to the FKBP-type PPIase family. Tig subfamily.

The protein resides in the cytoplasm. It carries out the reaction [protein]-peptidylproline (omega=180) = [protein]-peptidylproline (omega=0). In terms of biological role, involved in protein export. Acts as a chaperone by maintaining the newly synthesized protein in an open conformation. Functions as a peptidyl-prolyl cis-trans isomerase. This is Trigger factor from Paraburkholderia phymatum (strain DSM 17167 / CIP 108236 / LMG 21445 / STM815) (Burkholderia phymatum).